The chain runs to 551 residues: Cu(2+) suppressing and bleomycin sensitive protein 1 (551 aa).

2 coiled-coil regions span residues 174-213 (REID…EEID) and 249-300 (NSLL…DSGK). Positions 513-551 (EEKAQNSTSSDGSDDDDNGESGIDSNSNDSEPESEYQQE) are disordered. A compositionally biased stretch (low complexity) spans 532–541 (ESGIDSNSND). Positions 542–551 (SEPESEYQQE) are enriched in acidic residues.

The protein belongs to the CUB1 family. As to quaternary structure, monomer. Phosphorylated by PKA in vitro.

Its subcellular location is the cytoplasm. It is found in the nucleus. Functionally, involved in bleomycin tolerance with links to DNA repair and/or proteasome function. In Saccharomyces cerevisiae (strain ATCC 204508 / S288c) (Baker's yeast), this protein is Cu(2+) suppressing and bleomycin sensitive protein 1 (CUB1).